Here is a 711-residue protein sequence, read N- to C-terminus: C-Jun-amino-terminal kinase-interacting protein 1 (711 aa).

A disordered region spans residues 1–27; sequence MAERESGGLGGGAASPPAASPFLGLHI. The span at 14 to 25 shows a compositional bias: low complexity; the sequence is ASPPAASPFLGL. Phosphoserine occurs at positions 15, 29, and 40. Residues 78–371 form a disordered region; that stretch reads AGGGGAGSRL…PPRASLSSDT (294 aa). Threonine 103 is subject to Phosphothreonine; by MAPK8, MAPK9 and MAPK10. The span at 105 to 116 shows a compositional bias: acidic residues; sequence GAEDDEEDDDEE. Residues 127–285 form a JNK-binding domain (JBD) region; the sequence is PKAESGQEPA…EATEEIYLTP (159 aa). The span at 139–149 shows a compositional bias: low complexity; sequence GQGQSQGQSQG. The residue at position 152 (serine 152) is a Phosphoserine. The tract at residues 157 to 176 is minimal inhibitory domain (MID); the sequence is RPKRPTTLNLFPQVPRSQDT. Polar residues predominate over residues 162 to 182; it reads TTLNLFPQVPRSQDTLNNNSL. Phosphoserine is present on residues serine 181, serine 187, serine 193, serine 195, and serine 196. The span at 194-204 shows a compositional bias: polar residues; sequence RSSSPLKTGEQ. Threonine 205 bears the Phosphothreonine; by MAPK8, MAPK9 and MAPK10 mark. A Phosphoserine modification is found at serine 214. Positions 228 to 244 are enriched in polar residues; it reads DRGTSTDSPCRRSTATQ. Positions 267 to 277 are enriched in basic and acidic residues; the sequence is IHYQADVRLEA. An interaction with MAP3K7 region spans residues 283–471; sequence LTPVQRPPDA…NVFMSGRSRS (189 aa). A phosphoserine mark is found at serine 311, serine 328, serine 330, serine 340, serine 355, serine 366, serine 369, serine 407, and serine 409. Short sequence motifs (D-box) lie at residues 353-360 and 364-372; these read RGSLGEPP and RASLSSDTS. Threonine 411 is modified (phosphothreonine). The disordered stretch occupies residues 429-451; the sequence is EEYEEAPRPQPPACLSEDSTPDE. Serine 444 and serine 447 each carry phosphoserine. Threonine 448 is subject to Phosphothreonine. Phosphoserine is present on residues serine 469, serine 471, serine 472, and serine 473. The tract at residues 471-660 is interaction with VRK2; the sequence is SSSAESFGLF…PKNNKYFGFI (190 aa). The SH3 domain maps to 488-549; it reads EQEQTHRAIF…PAYYAIEVTK (62 aa). The PID domain maps to 561–700; the sequence is SDWVDQFRVK…FQQFYKQFVE (140 aa).

It belongs to the JIP scaffold family. As to quaternary structure, forms homo- or heterooligomeric complexes. Binds specific components of the JNK signaling pathway namely, MAPK8/JNK1, MAPK9/JNK2, MAPK10/JNK3, MAP2K7/MKK7, MAP3K11/MLK3 and DLK1. Also binds the proline-rich domain-containing splice variant of apolipoprotein E receptor 2 (ApoER2). Interacts, via the PID domain, with ARHGEF28. Binds the cytoplasmic tails of LRP1 and LRP2 (Megalin). Binds the TPR motif-containing C-terminal of KNS2, then the pre-assembled MAPK8IP1 scaffolding complexes are transported as a cargo of kinesin, to the required subcellular location. Interacts with the cytoplasmic domain of APP. Interacts with DCLK2. Interacts with MAP3K7/TAK1. Interacts with isoform 1 and isoform 2 of VRK2. Found in a complex with SH3RF1, RAC1, MAP3K11/MLK3, MAP2K7/MKK7 and MAPK8/JNK1. Found in a complex with SH3RF1, RAC2, MAP3K7/TAK1, MAP2K7/MKK7, MAPK8/JNK1 and MAPK9/JNK2. Interacts with SH3RF2. In terms of processing, phosphorylated by MAPK8, MAPK9 and MAPK10. Phosphorylation on Thr-103 is also necessary for the dissociation and activation of MAP3K12. Phosphorylated by isoform 1 and isoform 2 of VRK2. Hyperphosphorylated during mitosis following activation of stress-activated and MAP kinases. Ubiquitinated. Two preliminary events are required to prime for ubiquitination; phosphorylation and an increased in intracellular calcium concentration. Then, the calcium influx initiates ubiquitination and degradation by the ubiquitin-proteasome pathway. In terms of tissue distribution, highly expressed in brain. Expressed in neurons, localizing to neurite tips in differentiating cells. Also expressed in the pancreas, testis and prostate. Low levels in heart, ovary and small intestine. Decreased levels in pancreatic beta cells sensitize cells to IL-1-beta-induced apoptosis.

The protein resides in the cytoplasm. It is found in the perinuclear region. The protein localises to the nucleus. It localises to the endoplasmic reticulum membrane. Its subcellular location is the mitochondrion membrane. Functionally, the JNK-interacting protein (JIP) group of scaffold proteins selectively mediates JNK signaling by aggregating specific components of the MAPK cascade to form a functional JNK signaling module. Required for JNK activation in response to excitotoxic stress. Cytoplasmic MAPK8IP1 causes inhibition of JNK-regulated activity by retaining JNK in the cytoplasm and inhibiting JNK phosphorylation of c-Jun. May also participate in ApoER2-specific reelin signaling. Directly, or indirectly, regulates GLUT2 gene expression and beta-cell function. Appears to have a role in cell signaling in mature and developing nerve terminals. May function as a regulator of vesicle transport, through interactions with the JNK-signaling components and motor proteins. Functions as an anti-apoptotic protein and whose level seems to influence the beta-cell death or survival response. Acts as a scaffold protein that coordinates with SH3RF1 in organizing different components of the JNK pathway, including RAC1 or RAC2, MAP3K11/MLK3 or MAP3K7/TAK1, MAP2K7/MKK7, MAPK8/JNK1 and/or MAPK9/JNK2 into a functional multiprotein complex to ensure the effective activation of the JNK signaling pathway. Regulates the activation of MAPK8/JNK1 and differentiation of CD8(+) T-cells. This chain is C-Jun-amino-terminal kinase-interacting protein 1 (MAPK8IP1), found in Homo sapiens (Human).